A 197-amino-acid polypeptide reads, in one-letter code: Recombination protein RecR (197 aa).

A C4-type zinc finger spans residues 56-71 (CSVCGNFDTIDPCAIC). The 96-residue stretch at 79-174 (SMLCVVEDVA…TVSGLAHGVP (96 aa)) folds into the Toprim domain.

The protein belongs to the RecR family.

In terms of biological role, may play a role in DNA repair. It seems to be involved in an RecBC-independent recombinational process of DNA repair. It may act with RecF and RecO. In Paramagnetospirillum magneticum (strain ATCC 700264 / AMB-1) (Magnetospirillum magneticum), this protein is Recombination protein RecR.